The chain runs to 248 residues: Agamous-like MADS-box protein AGL1 (248 aa).

Positions 18-72 (RGKIEIKRIENTTNRQVTFCKRRNGLLKKAYELSVLCDAEVALVIFSTRGRLYEY) constitute an MADS-box domain. One can recognise a K-box domain in the interval 102–192 (TQYYQQEASK…RAKIAEGARL (91 aa)).

As to quaternary structure, interacts with AGL15 and AGL16.

Its subcellular location is the nucleus. Functionally, probable transcription factor. Interacts genetically with TT16/AGL32 in a partially antagonistic manner during flower development. Is essential for the coordination of cell divisions in ovule, seed coat development and endosperm formation. This chain is Agamous-like MADS-box protein AGL1 (AGL1), found in Arabidopsis thaliana (Mouse-ear cress).